We begin with the raw amino-acid sequence, 93 residues long: Protein ea8.5 (93 aa).

The sequence is that of Protein ea8.5 (ea8.5) from Escherichia phage lambda (Bacteriophage lambda).